Consider the following 337-residue polypeptide: LIX1-like protein (337 aa).

The tract at residues Met1–Pro55 is disordered. A compositionally biased stretch (low complexity) spans Pro26–Pro38. A compositionally biased stretch (pro residues) spans Pro39–Pro55.

The protein belongs to the LIX1 family.

The polypeptide is LIX1-like protein (Lix1l) (Mus musculus (Mouse)).